A 384-amino-acid chain; its full sequence is Probable endopolygalacturonase C (384 aa).

The signal sequence occupies residues 1–19 (MVRQLALACGLLAAVAVQA). A propeptide spanning residues 20–40 (APAEPAHPMVTEAPDASLLHK) is cleaved from the precursor. The cysteines at positions 45 and 63 are disulfide-linked. 2 PbH1 repeats span residues 176 to 207 (ATDLTLTDITIDNTDGDTDDLAANTDGFDIGE) and 208 to 229 (STDITITGAKVYNQDDCVAINS). Asp222 acts as the Proton donor in catalysis. A disulfide bridge connects residues Cys224 and Cys240. His244 is an active-site residue. PbH1 repeat units follow at residues 254 to 280 (RDDNTVKNVTFYDVNVLKSQQAIRIKA) and 288 to 310 (ISDITYHEIAFSDATDYGIVIEQ). Asn261 is a glycosylation site (N-linked (GlcNAc...) asparagine). Intrachain disulfides connect Cys349–Cys354 and Cys373–Cys382.

This sequence belongs to the glycosyl hydrolase 28 family.

The protein resides in the secreted. It catalyses the reaction (1,4-alpha-D-galacturonosyl)n+m + H2O = (1,4-alpha-D-galacturonosyl)n + (1,4-alpha-D-galacturonosyl)m.. In terms of biological role, involved in maceration and soft-rotting of plant tissue. Hydrolyzes the 1,4-alpha glycosidic bonds of de-esterified pectate in the smooth region of the plant cell wall. This is Probable endopolygalacturonase C (pgaC) from Aspergillus aculeatus.